We begin with the raw amino-acid sequence, 65 residues long: DNA-directed RNA polymerase subunit Rpo10 (65 aa).

Zn(2+) contacts are provided by Cys-7, Cys-10, Cys-44, and Cys-45.

Belongs to the archaeal Rpo10/eukaryotic RPB10 RNA polymerase subunit family. Part of the RNA polymerase complex. It depends on Zn(2+) as a cofactor.

It is found in the cytoplasm. It carries out the reaction RNA(n) + a ribonucleoside 5'-triphosphate = RNA(n+1) + diphosphate. Functionally, DNA-dependent RNA polymerase (RNAP) catalyzes the transcription of DNA into RNA using the four ribonucleoside triphosphates as substrates. In Nanoarchaeum equitans (strain Kin4-M), this protein is DNA-directed RNA polymerase subunit Rpo10.